The sequence spans 289 residues: Acetyl-coenzyme A carboxylase carboxyl transferase subunit beta (289 aa).

Residues 28–289 form the CoA carboxyltransferase N-terminal domain; the sequence is VMTKCPECKK…QGGEMAVWQS (262 aa). Residues Cys-32, Cys-35, Cys-51, and Cys-54 each contribute to the Zn(2+) site. The C4-type zinc-finger motif lies at 32 to 54; it reads CPECKKIMYTKELLKNLKVCVNC.

Belongs to the AccD/PCCB family. Acetyl-CoA carboxylase is a heterohexamer composed of biotin carboxyl carrier protein (AccB), biotin carboxylase (AccC) and two subunits each of ACCase subunit alpha (AccA) and ACCase subunit beta (AccD). Zn(2+) serves as cofactor.

The protein resides in the cytoplasm. It carries out the reaction N(6)-carboxybiotinyl-L-lysyl-[protein] + acetyl-CoA = N(6)-biotinyl-L-lysyl-[protein] + malonyl-CoA. It functions in the pathway lipid metabolism; malonyl-CoA biosynthesis; malonyl-CoA from acetyl-CoA: step 1/1. Component of the acetyl coenzyme A carboxylase (ACC) complex. Biotin carboxylase (BC) catalyzes the carboxylation of biotin on its carrier protein (BCCP) and then the CO(2) group is transferred by the transcarboxylase to acetyl-CoA to form malonyl-CoA. The chain is Acetyl-coenzyme A carboxylase carboxyl transferase subunit beta from Bacillus cereus (strain ATCC 14579 / DSM 31 / CCUG 7414 / JCM 2152 / NBRC 15305 / NCIMB 9373 / NCTC 2599 / NRRL B-3711).